We begin with the raw amino-acid sequence, 824 residues long: MSDQDGKKPLGLSGGARSGRVNQSFSRGRTKSVVVETKRKRVMVPKPGAPSAAAQNAEGGKRDKSVPDAEMDRRLKALQAAKARESQEAEERVKAEREREEERNRRRADAEAKEREEREREEALKAKEEEDDRRKAEEEARRNAPPEAAAPAVDPAAAATPRGGGKAAPARREPERDNKRENRSRGNDGGGRRAGKLTVNQAMSGGEGGRQRSMAAMKRKQERQRQKAMGGSVDREKVIRDVKVPETIIVAELANRMSERVGDVVKALMNNGMMITQNQPIDADTAELIIEEFGHRVQRVSDADVEQVIDTVEDDEGKLLPRPPVITIMGHVDHGKTSLLDRIRQANVVSGEAGGITQHIGAYQVTTESGAVLSFLDTPGHAAFTSMRARGAQVTDIVVLVVAADDAVMPQTIEAIAHAKAAEVPMIVAINKIDRPAADPQKVRTDLLQHEVIVEAMSGEVQDVEVSAMTGQGLPELLEAIALQAELLELKANPDRAAQGAVIEAQLDVGRGPVATVLVEKGTLRQGDIFVVGEQWGKVRALVNDQGDRVKDAGPSVPVEVLGLNGTPEAGDVLNVVETEAQAREIAEYREQAAKDKRAAAGAATTLDQLLANAKADENVRELQVVMKADVQGSAEAIVQALEKIGNDEVRVRVLHYGVGAITESDIGLAEASGTPVIGFNVRANAPARNAANQKGVEIRYYSVIYDLVDDVKAAASGLLGAEIRENFIGYANIKEVFKVSGVGNVAGCLVTEGVARRSAGVRLLRDDVVIHEGTLKTLKRFKDEVKEVQSGQECGMAFENYEDIRPDDVIEIFEREEVERSLT.

A disordered region spans residues M1–D234. Basic and acidic residues-rich tracts occupy residues G59–L75 and K82–A144. The span at P145–A159 shows a compositional bias: low complexity. The segment covering A170–G186 has biased composition (basic and acidic residues). One can recognise a tr-type G domain in the interval P321–K491. The interval G330 to T337 is G1. G330 to T337 contacts GTP. Residues G355–H359 are G2. The segment at D377 to G380 is G3. GTP is bound by residues D377–H381 and N431–D434. The interval N431–D434 is G4. Residues S467–M469 are G5.

The protein belongs to the TRAFAC class translation factor GTPase superfamily. Classic translation factor GTPase family. IF-2 subfamily.

It localises to the cytoplasm. One of the essential components for the initiation of protein synthesis. Protects formylmethionyl-tRNA from spontaneous hydrolysis and promotes its binding to the 30S ribosomal subunits. Also involved in the hydrolysis of GTP during the formation of the 70S ribosomal complex. In Jannaschia sp. (strain CCS1), this protein is Translation initiation factor IF-2.